Consider the following 263-residue polypeptide: Type III pantothenate kinase (263 aa).

14–21 (DIGNTSVN) lines the ATP pocket. 115–118 (GADR) provides a ligand contact to substrate. The Proton acceptor role is filled by D117. Position 137 (D137) interacts with K(+). Residue T140 coordinates ATP. Substrate is bound at residue T192.

Belongs to the type III pantothenate kinase family. As to quaternary structure, homodimer. Requires NH4(+) as cofactor. K(+) serves as cofactor.

The protein resides in the cytoplasm. The enzyme catalyses (R)-pantothenate + ATP = (R)-4'-phosphopantothenate + ADP + H(+). It participates in cofactor biosynthesis; coenzyme A biosynthesis; CoA from (R)-pantothenate: step 1/5. Its function is as follows. Catalyzes the phosphorylation of pantothenate (Pan), the first step in CoA biosynthesis. The protein is Type III pantothenate kinase of Dehalococcoides mccartyi (strain ATCC BAA-2100 / JCM 16839 / KCTC 5957 / BAV1).